Here is a 501-residue protein sequence, read N- to C-terminus: ATP synthase subunit alpha (501 aa).

169–176 contacts ATP; sequence GDRQTGKT.

Belongs to the ATPase alpha/beta chains family. In terms of assembly, F-type ATPases have 2 components, CF(1) - the catalytic core - and CF(0) - the membrane proton channel. CF(1) has five subunits: alpha(3), beta(3), gamma(1), delta(1), epsilon(1). CF(0) has three main subunits: a(1), b(2) and c(9-12). The alpha and beta chains form an alternating ring which encloses part of the gamma chain. CF(1) is attached to CF(0) by a central stalk formed by the gamma and epsilon chains, while a peripheral stalk is formed by the delta and b chains.

It is found in the cell membrane. The catalysed reaction is ATP + H2O + 4 H(+)(in) = ADP + phosphate + 5 H(+)(out). In terms of biological role, produces ATP from ADP in the presence of a proton gradient across the membrane. The alpha chain is a regulatory subunit. This is ATP synthase subunit alpha from Streptococcus pneumoniae (strain Hungary19A-6).